The primary structure comprises 130 residues: Protein ApaG (130 aa).

An ApaG domain is found at 3-127 (RALTRDIEVT…FSLDSPGLVR (125 aa)).

This chain is Protein ApaG, found in Rhizobium meliloti (strain 1021) (Ensifer meliloti).